The chain runs to 142 residues: Large ribosomal subunit protein uL13 (142 aa).

Belongs to the universal ribosomal protein uL13 family. In terms of assembly, part of the 50S ribosomal subunit.

Functionally, this protein is one of the early assembly proteins of the 50S ribosomal subunit, although it is not seen to bind rRNA by itself. It is important during the early stages of 50S assembly. This chain is Large ribosomal subunit protein uL13, found in Methylococcus capsulatus (strain ATCC 33009 / NCIMB 11132 / Bath).